The chain runs to 339 residues: Dihydroorotate dehydrogenase (quinone) (339 aa).

FMN is bound by residues 64-68 (AGADK) and threonine 88. Lysine 68 contacts substrate. 113-117 (NRNGF) serves as a coordination point for substrate. Positions 141 and 174 each coordinate FMN. Asparagine 174 provides a ligand contact to substrate. Serine 177 serves as the catalytic Nucleophile. Asparagine 179 lines the substrate pocket. FMN contacts are provided by lysine 219 and threonine 247. 248–249 (NT) is a binding site for substrate. FMN contacts are provided by residues glycine 270, glycine 299, and 320–321 (YS).

The protein belongs to the dihydroorotate dehydrogenase family. Type 2 subfamily. Monomer. It depends on FMN as a cofactor.

It is found in the cell membrane. It catalyses the reaction (S)-dihydroorotate + a quinone = orotate + a quinol. It functions in the pathway pyrimidine metabolism; UMP biosynthesis via de novo pathway; orotate from (S)-dihydroorotate (quinone route): step 1/1. Catalyzes the conversion of dihydroorotate to orotate with quinone as electron acceptor. The protein is Dihydroorotate dehydrogenase (quinone) of Haemophilus influenzae (strain PittEE).